Here is a 1308-residue protein sequence, read N- to C-terminus: Receptor tyrosine-protein kinase erbB-4 (1308 aa).

An N-terminal signal peptide occupies residues 1-25; it reads MKLATGLWVWGSLLMAAGTVQPSAS. The Extracellular portion of the chain corresponds to 26-652; that stretch reads QSVCAGTENK…TLPQHARTPL (627 aa). Cys-29 and Cys-56 are oxidised to a cystine. N-linked (GlcNAc...) asparagine glycans are attached at residues Asn-138, Asn-174, and Asn-181. Disulfide bonds link Cys-156–Cys-186, Cys-189–Cys-197, Cys-193–Cys-205, Cys-213–Cys-221, Cys-217–Cys-229, Cys-230–Cys-238, Cys-234–Cys-246, Cys-249–Cys-258, Cys-262–Cys-289, Cys-293–Cys-304, Cys-308–Cys-323, and Cys-326–Cys-330. The N-linked (GlcNAc...) asparagine glycan is linked to Asn-253. N-linked (GlcNAc...) asparagine glycosylation is found at Asn-410, Asn-473, and Asn-495. 10 disulfides stabilise this stretch: Cys-503/Cys-512, Cys-507/Cys-520, Cys-523/Cys-532, Cys-536/Cys-552, Cys-555/Cys-569, Cys-559/Cys-577, Cys-580/Cys-589, Cys-593/Cys-614, Cys-617/Cys-625, and Cys-621/Cys-633. Asn-548 carries N-linked (GlcNAc...) asparagine glycosylation. The N-linked (GlcNAc...) asparagine glycan is linked to Asn-576. Asn-620 carries N-linked (GlcNAc...) asparagine glycosylation. At 653–673 the chain is embedded in the membrane; the sequence is IAAGVIGGLFILVIMALTFAV. The Cytoplasmic segment spans residues 674 to 1308; the sequence is YVRRKSIKKK…PPYRHRNTVV (635 aa). Positions 676–684 match the Nuclear localization signal motif; it reads RRKSIKKKR. The Protein kinase domain occupies 718–985; it reads LKRVKVLGSG…RMARDPQRYL (268 aa). ATP-binding positions include 724–732, Lys-751, 797–799, and 843–848; these read LGSGAFGTV, QLM, and DLAARN. The Proton acceptor role is filled by Asp-843. 3 positions are modified to phosphotyrosine; by autocatalysis: Tyr-875, Tyr-1035, and Tyr-1056. The PPxy motif 1 signature appears at 1032-1035; sequence PPIY. Residues 1117–1149 are disordered; sequence PHVQEDSSTQRYSADPTVFAPERNPRGELDEEG. A phosphotyrosine; by autocatalysis mark is found at Tyr-1150, Tyr-1162, Tyr-1188, Tyr-1202, Tyr-1242, Tyr-1258, and Tyr-1284. The PPxY motif 2 motif lies at 1282–1285; sequence PEYL. The short motif at 1290 to 1292 is the PDZ-binding element; that stretch reads LKP.

It belongs to the protein kinase superfamily. Tyr protein kinase family. EGF receptor subfamily. Monomer in the absence of bound ligand. Homodimer or heterodimer with another ERBB family member upon ligand binding, thus forming heterotetramers. Interacts with EGFR and ERBB2. Interacts with DLG2 (via its PDZ domain), DLG3 (via its PDZ domain), DLG4 (via its PDZ domain) and SNTB2 (via its PDZ domain). Interacts with MUC1. Interacts (via its PPxy motifs) with WWOX. Interacts (via the PPxY motif 3 of isoform JM-A CYT-2) with YAP1 (via the WW domain 1 of isoform 1). Interacts (isoform JM-A CYT-1 and isoform JM-B CYT-1) with WWP1. Interacts (via its intracellular domain) with TRIM28. Interacts (via the intracellular domains of both CYT-1 and CYT-2 isoforms) with KAP1; the interaction does not phosphorylate KAP1 but represses ERBB4-mediated transcriptional activity. Interacts with PRPU, DDX23, MATR3, RBM15, ILF3, KAP1, U5S1, U2SURP, ITCH, HNRNPU, AP2A1, NULC, LEO1, WWP2, IGHG1, HXK1, GRB7 and SRRT. Interacts (phosphorylated isoform JM-A CYT-1 and isoform JM-B CYT-1) with PIK3R1. Interacts with SHC1. Interacts with GRB2. Interacts (soluble intracellular domain) with BCL2. Interacts (phosphorylated) with STAT1. Interacts with CBFA2T3. Interacts (soluble intracellular domain) with STAT5A. In terms of processing, isoform JM-A CYT-1 and isoform JM-A CYT-2 are processed by ADAM17. Proteolytic processing in response to ligand or 12-O-tetradecanoylphorbol-13-acetate stimulation results in the production of 120 kDa soluble receptor forms and intermediate membrane-anchored 80 kDa fragments (m80HER4), which are further processed by a presenilin-dependent gamma-secretase to release a cytoplasmic intracellular domain (E4ICD; E4ICD1/s80Cyt1 or E4ICD2/s80Cyt2, depending on the isoform). Membrane-anchored 80 kDa fragments of the processed isoform JM-A CYT-1 are more readily degraded by the proteasome than fragments of isoform JM-A CYT-2, suggesting a prevalence of E4ICD2 over E4ICD1. Isoform JM-B CYT-1 and isoform JM-B CYT-2 lack the ADAM17 cleavage site and are not processed by ADAM17, precluding further processing by gamma-secretase. Post-translationally, autophosphorylated on tyrosine residues in response to ligand binding. Autophosphorylation occurs in trans, i.e. one subunit of the dimeric receptor phosphorylates tyrosine residues on the other subunit. Ligands trigger phosphorylation at specific tyrosine residues, thereby creating binding sites for scaffold proteins and effectors. Constitutively phosphorylated at a basal level when overexpressed in heterologous systems; ligand binding leads to increased phosphorylation. Phosphorylation at Tyr-1035 is important for interaction with STAT1. Phosphorylation at Tyr-1056 is important for interaction with PIK3R1. Phosphorylation at Tyr-1242 is important for interaction with SHC1. Phosphorylation at Tyr-1188 may also contribute to the interaction with SHC1. Isoform JM-A CYT-2 is constitutively phosphorylated on tyrosine residues in a ligand-independent manner. E4ICD2 but not E4ICD1 is phosphorylated on tyrosine residues. Ubiquitinated. During mitosis, the ERBB4 intracellular domain is ubiquitinated by the APC/C complex and targeted to proteasomal degradation. Isoform JM-A CYT-1 and isoform JM-B CYT-1 are ubiquitinated by WWP1. The ERBB4 intracellular domain (E4ICD1) is ubiquitinated, and this involves NEDD4. Isoform JM-A CYT-2 and isoform JM-B CYT-2 are expressed in cerebellum, cerebral cortex, spinal cord, medulla oblongata and eye, but the kidney expresses solely isoform JM-A CYT-2 and the heart solely isoform JM-B CYT-2.

The protein localises to the cell membrane. It localises to the nucleus. Its subcellular location is the mitochondrion. It carries out the reaction L-tyrosyl-[protein] + ATP = O-phospho-L-tyrosyl-[protein] + ADP + H(+). With respect to regulation, binding of a cognate ligand leads to dimerization and activation by autophosphorylation on tyrosine residues. In vitro kinase activity is increased by Mg(2+). In terms of biological role, tyrosine-protein kinase that plays an essential role as cell surface receptor for neuregulins and EGF family members and regulates development of the heart, the central nervous system and the mammary gland, gene transcription, cell proliferation, differentiation, migration and apoptosis. Required for normal cardiac muscle differentiation during embryonic development, and for postnatal cardiomyocyte proliferation. Required for normal development of the embryonic central nervous system, especially for normal neural crest cell migration and normal axon guidance. Required for mammary gland differentiation, induction of milk proteins and lactation. Acts as cell-surface receptor for the neuregulins NRG1, NRG2, NRG3 and NRG4 and the EGF family members BTC, EREG and HBEGF. Ligand binding triggers receptor dimerization and autophosphorylation at specific tyrosine residues that then serve as binding sites for scaffold proteins and effectors. Ligand specificity and signaling is modulated by alternative splicing, proteolytic processing, and by the formation of heterodimers with other ERBB family members, thereby creating multiple combinations of intracellular phosphotyrosines that trigger ligand- and context-specific cellular responses. Mediates phosphorylation of SHC1 and activation of the MAP kinases MAPK1/ERK2 and MAPK3/ERK1. Isoform JM-A CYT-1 and isoform JM-B CYT-1 phosphorylate PIK3R1, leading to the activation of phosphatidylinositol 3-kinase and AKT1 and protect cells against apoptosis. Isoform JM-A CYT-1 and isoform JM-B CYT-1 mediate reorganization of the actin cytoskeleton and promote cell migration in response to NRG1. Isoform JM-A CYT-2 and isoform JM-B CYT-2 lack the phosphotyrosine that mediates interaction with PIK3R1, and hence do not phosphorylate PIK3R1, do not protect cells against apoptosis, and do not promote reorganization of the actin cytoskeleton and cell migration. Proteolytic processing of isoform JM-A CYT-1 and isoform JM-A CYT-2 gives rise to the corresponding soluble intracellular domains (4ICD) that translocate to the nucleus, promote nuclear import of STAT5A, activation of STAT5A, mammary epithelium differentiation, cell proliferation and activation of gene expression. The ERBB4 soluble intracellular domains (4ICD) colocalize with STAT5A at the CSN2 promoter to regulate transcription of milk proteins during lactation. The ERBB4 soluble intracellular domains can also translocate to mitochondria and promote apoptosis. The polypeptide is Receptor tyrosine-protein kinase erbB-4 (Erbb4) (Mus musculus (Mouse)).